The sequence spans 612 residues: Probable methyltransferase PMT9 (612 aa).

Residues 1–14 lie on the Cytoplasmic side of the membrane; it reads MKHFRTERVRATPK. A helical; Signal-anchor for type II membrane protein transmembrane segment spans residues 15–35; it reads LFTYVLVGFIALLGLTCLYYG. Residues 36–612 are Lumenal-facing; it reads SSFAPGSRKS…LWSLPAISVS (577 aa). Residues N107, N383, and N562 are each glycosylated (N-linked (GlcNAc...) asparagine).

The protein belongs to the methyltransferase superfamily.

It localises to the golgi apparatus membrane. In Arabidopsis thaliana (Mouse-ear cress), this protein is Probable methyltransferase PMT9.